Consider the following 389-residue polypeptide: tRNA (cytosine(72)-C(5))-methyltransferase (389 aa).

One can recognise a PUA domain in the interval 92–167 (LPVVVANKYA…LAVEVTLPKF (76 aa)). S-adenosyl-L-methionine contacts are provided by residues 209-215 (AAAPGGK), Asp-233, Arg-238, Asp-260, Asp-277, and Tyr-304. Cys-327 serves as the catalytic Nucleophile.

The protein belongs to the class I-like SAM-binding methyltransferase superfamily. RsmB/NOP family.

The enzyme catalyses cytidine(72) in tRNA + S-adenosyl-L-methionine = 5-methylcytidine(72) in tRNA + S-adenosyl-L-homocysteine + H(+). The catalysed reaction is cytidine(72) in tRNA(Thr) + S-adenosyl-L-methionine = 5-methylcytidine(72) in tRNA(Thr) + S-adenosyl-L-homocysteine + H(+). It catalyses the reaction cytidine(72) in tRNA(Cys) + S-adenosyl-L-methionine = 5-methylcytidine(72) in tRNA(Cys) + S-adenosyl-L-homocysteine + H(+). Its function is as follows. S-adenosyl-L-methionine-dependent methyltransferase that specifically methylates the C5 position of cytosine 72 in several tRNAs. This modification appears to slightly promote the thermal stability of P.horikoshii tRNAs, but does not affect their amino acid accepting activity. Four elements in the acceptor stems of tRNAs are essential for substrate recognition by this enzyme: the target site C72, the 3'-CCA terminus, U73 or G73, and the second base pair C2:G71. In Pyrococcus horikoshii (strain ATCC 700860 / DSM 12428 / JCM 9974 / NBRC 100139 / OT-3), this protein is tRNA (cytosine(72)-C(5))-methyltransferase.